A 192-amino-acid chain; its full sequence is MYQDLIRNELNEAAETLANFLKDDANIHAIQRAAVLLADSFKAGGKVLSCGNGGSHCDAMHFAEELTGRYRENRPGYPAIAISDVSHISCVGNDFGFNDIFSRYVEAVGREGDVLLGISTSGNSANVIKAIAAAREKGMKVITLTGKDGGKMAGMADIEIRVPHFGYADRIQEIHIKVIHILIQLIEKEMAK.

Residues 37-192 enclose the SIS domain; it reads LADSFKAGGK…IQLIEKEMAK (156 aa). 52-54 contributes to the substrate binding site; sequence NGG. 2 residues coordinate Zn(2+): H61 and E65. Residues E65, 93 to 94, 119 to 121, S124, and Q172 each bind substrate; these read ND and STS. The Zn(2+) site is built by Q172 and H180.

This sequence belongs to the SIS family. GmhA subfamily. As to quaternary structure, homotetramer. Requires Zn(2+) as cofactor.

Its subcellular location is the cytoplasm. The enzyme catalyses 2 D-sedoheptulose 7-phosphate = D-glycero-alpha-D-manno-heptose 7-phosphate + D-glycero-beta-D-manno-heptose 7-phosphate. It participates in carbohydrate biosynthesis; D-glycero-D-manno-heptose 7-phosphate biosynthesis; D-glycero-alpha-D-manno-heptose 7-phosphate and D-glycero-beta-D-manno-heptose 7-phosphate from sedoheptulose 7-phosphate: step 1/1. Its function is as follows. Catalyzes the isomerization of sedoheptulose 7-phosphate in D-glycero-D-manno-heptose 7-phosphate. This chain is Phosphoheptose isomerase, found in Escherichia fergusonii (strain ATCC 35469 / DSM 13698 / CCUG 18766 / IAM 14443 / JCM 21226 / LMG 7866 / NBRC 102419 / NCTC 12128 / CDC 0568-73).